We begin with the raw amino-acid sequence, 95 residues long: uncharacterized protein (95 aa).

A compositionally biased stretch (low complexity) spans 1–12 (MQNFMNNLSGGS). The segment at 1 to 27 (MQNFMNNLSGGSNKEGGEKSNDFLSSA) is disordered.

This is an uncharacterized protein from Schizosaccharomyces pombe (strain 972 / ATCC 24843) (Fission yeast).